Consider the following 304-residue polypeptide: Small glutamine-rich tetratricopeptide repeat-containing protein beta (304 aa).

TPR repeat units lie at residues 15-49, 85-118, 119-152, and 153-186; these read LREQ…SPED, ADQL…DPNN, AVYY…DSKY, and SKAY…DPEN. Lys131 bears the N6-acetyllysine mark. 3 positions are modified to phosphoserine: Ser293, Ser295, and Ser297.

Belongs to the SGT family. As to quaternary structure, homooligomerize.

Its function is as follows. Co-chaperone that binds directly to HSC70 and HSP70 and regulates their ATPase activity. This is Small glutamine-rich tetratricopeptide repeat-containing protein beta (SGTB) from Homo sapiens (Human).